The primary structure comprises 87 residues: Small ribosomal subunit protein bS20 (87 aa).

The tract at residues 1 to 26 (MANIKSAKKRAVQSEKARKHNASRRS) is disordered.

The protein belongs to the bacterial ribosomal protein bS20 family.

In terms of biological role, binds directly to 16S ribosomal RNA. The sequence is that of Small ribosomal subunit protein bS20 from Enterobacter sp. (strain 638).